A 733-amino-acid polypeptide reads, in one-letter code: 1,4-alpha-glucan branching enzyme GlgB (733 aa).

The active-site Nucleophile is D413. The Proton donor role is filled by E466.

It belongs to the glycosyl hydrolase 13 family. GlgB subfamily. In terms of assembly, monomer.

The enzyme catalyses Transfers a segment of a (1-&gt;4)-alpha-D-glucan chain to a primary hydroxy group in a similar glucan chain.. Its pathway is glycan biosynthesis; glycogen biosynthesis. Catalyzes the formation of the alpha-1,6-glucosidic linkages in glycogen by scission of a 1,4-alpha-linked oligosaccharide from growing alpha-1,4-glucan chains and the subsequent attachment of the oligosaccharide to the alpha-1,6 position. This Leifsonia xyli subsp. xyli (strain CTCB07) protein is 1,4-alpha-glucan branching enzyme GlgB.